A 287-amino-acid chain; its full sequence is Leukocyte-associated immunoglobulin-like receptor 1 (287 aa).

The N-terminal stretch at 1–21 (MSPHPTALLGLVLCLAQTIHT) is a signal peptide. The Extracellular segment spans residues 22–165 (QEEDLPRPSI…SQGLKAEHLY (144 aa)). The 89-residue stretch at 29–117 (PSISAEPGTV…KWSEQSDYLE (89 aa)) folds into the Ig-like C2-type domain. Cys49 and Cys101 form a disulfide bridge. Asn69 is a glycosylation site (N-linked (GlcNAc...) asparagine). Residues 121–155 (KESSGGPDSPDTEPGSSAGPTQRPSDNSHNEHAPA) are disordered. A compositionally biased stretch (polar residues) spans 134 to 145 (PGSSAGPTQRPS). Residues 166–186 (ILIGVSVVFLFCLLLLVLFCL) traverse the membrane as a helical segment. The Cytoplasmic segment spans residues 187 to 287 (HRQNQIKQGP…SITYAAVARH (101 aa)). The segment at 192 to 211 (IKQGPPRSKDEEQKPQQRPD) is disordered. Basic and acidic residues predominate over residues 198–208 (RSKDEEQKPQQ). Short sequence motifs (ITIM motif) lie at residues 249–254 (VTYAQL) and 279–284 (ITYAAV). A phosphotyrosine mark is found at Tyr251 and Tyr281.

As to quaternary structure, interacts with SH2 domains of tyrosine-protein phosphatases PTPN6 and PTPN11. The interaction with PTPN6 is constitutive. Interacts with the SH2 domain of CSK. Binds with high affinity to extracellular matrix collagens, the interaction is functionally important. Phosphorylation at Tyr-251 and Tyr-281 activates it. May be phosphorylated by LCK. Post-translationally, N-glycosylated. As to expression, expressed on the majority of peripheral mononuclear cells, including natural killer (NK) cells, T-cells, B-cells, monocytes, and dendritic cells. Highly expressed in naive T-cells and B-cells but no expression on germinal center B-cells. Abnormally low expression in naive B-cells from HIV-1 infected patients. Very low expression in NK cells from a patient with chronic active Epstein-Barr virus infection.

The protein localises to the cell membrane. Functions as an inhibitory receptor that plays a constitutive negative regulatory role on cytolytic function of natural killer (NK) cells, B-cells and T-cells. Activation by Tyr phosphorylation results in recruitment and activation of the phosphatases PTPN6 and PTPN11. It also reduces the increase of intracellular calcium evoked by B-cell receptor ligation. May also play its inhibitory role independently of SH2-containing phosphatases. Modulates cytokine production in CD4+ T-cells, down-regulating IL2 and IFNG production while inducing secretion of transforming growth factor beta. Also down-regulates IgG and IgE production in B-cells as well as IL8, IL10 and TNF secretion. Inhibits proliferation and induces apoptosis in myeloid leukemia cell lines as well as prevents nuclear translocation of NF-kappa-B p65 subunit/RELA and phosphorylation of I-kappa-B alpha/CHUK in these cells. Inhibits the differentiation of peripheral blood precursors towards dendritic cells. This Homo sapiens (Human) protein is Leukocyte-associated immunoglobulin-like receptor 1 (LAIR1).